Consider the following 423-residue polypeptide: MFYSIFFIHILRIVLVDCNEYSEENVDDRHKWAVLVAGSNGFENYRHQADVCHAYHVLLSKGVKPEHIITFMYDDIAHNKENPFPGKIFNDYRHKDYYKGVVIDYKGKKVNPKTFLQVLKGDKRAGGKVLKSGKNDDVFIYFTDHGAPGILAFPDDDLHAKPFINTLKYLRQHRRYSKLVIYVEACESGSMFAGLLPTDINIYATTAARPDESSYATFCDDPRISSCLADLYSYDWIVDSEKHQLTQRTLDQQYKEVKFETNLSHVQRYGDKKMGKLYLSEFQGSRKKASTEHDEPPMKPKDSIPSRDIPLHTLHRRIMMANNMNDKTLLMKILGLKLKRRDLIKDTMEVIDQFMFNVKQPNSNATIDETMDCIEVVYKEFQSKCFKIQQAPEITGYLSTLYNYCQKGYSAENINGVIRKVCG.

The signal sequence occupies residues methionine 1–cysteine 18. The propeptide occupies asparagine 19–arginine 29. Active-site residues include histidine 145 and cysteine 186. A disordered region spans residues arginine 286–arginine 307. Residues arginine 286–glycine 423 constitute a propeptide that is removed on maturation. The segment covering alanine 289–proline 305 has biased composition (basic and acidic residues).

This sequence belongs to the peptidase C13 family. As to expression, gut.

It catalyses the reaction Hydrolysis of proteins and small molecule substrates at -Asn-|-Xaa- bonds.. In terms of biological role, this protease is used by the parasite for degradation of the host globin. The protein is Hemoglobinase (HAEM) of Schistosoma japonicum (Blood fluke).